Consider the following 164-residue polypeptide: ATP synthase subunit b (164 aa).

Residues 4–24 (LGINPTLFIAQLINFLLLIFI) traverse the membrane as a helical segment.

It belongs to the ATPase B chain family. In terms of assembly, F-type ATPases have 2 components, F(1) - the catalytic core - and F(0) - the membrane proton channel. F(1) has five subunits: alpha(3), beta(3), gamma(1), delta(1), epsilon(1). F(0) has four main subunits: a(1), b(2) and c(10-14). The alpha and beta chains form an alternating ring which encloses part of the gamma chain. F(1) is attached to F(0) by a central stalk formed by the gamma and epsilon chains, while a peripheral stalk is formed by the delta and b chains.

Its subcellular location is the cell membrane. Its function is as follows. F(1)F(0) ATP synthase produces ATP from ADP in the presence of a proton or sodium gradient. F-type ATPases consist of two structural domains, F(1) containing the extramembraneous catalytic core and F(0) containing the membrane proton channel, linked together by a central stalk and a peripheral stalk. During catalysis, ATP synthesis in the catalytic domain of F(1) is coupled via a rotary mechanism of the central stalk subunits to proton translocation. Functionally, component of the F(0) channel, it forms part of the peripheral stalk, linking F(1) to F(0). The polypeptide is ATP synthase subunit b (Chloroflexus aurantiacus (strain ATCC 29366 / DSM 635 / J-10-fl)).